A 1238-amino-acid chain; its full sequence is Lysine-specific demethylase JMJ703 (1238 aa).

The tract at residues 56 to 79 (EECQPSAAVSRSDTPCSTSGTQTC) is disordered. The span at 62–79 (AAVSRSDTPCSTSGTQTC) shows a compositional bias: polar residues. The JmjN domain occupies 154–195 (APVFYPTEEEFEDTLKYIESIRPMAEPYGICRIVPPSSWKPP). Residues 215-266 (KVDKLQNRKSSKKGRRGGMMKRRKLAESEENSATAHTQTGMQQSPERFGFEP) are disordered. Residues 221–238 (NRKSSKKGRRGGMMKRRK) are compositionally biased toward basic residues. The segment covering 245 to 259 (NSATAHTQTGMQQSP) has biased composition (polar residues). Residues 348 to 514 (KYAQSGWNLN…IGHNAVELYR (167 aa)) enclose the JmjC domain. Fe cation contacts are provided by histidine 394, glutamate 396, and histidine 482. Disordered regions lie at residues 699-725 (GPRRSYMSQASAVSLVSSSTSNEQKDE), 777-798 (YNGGLGGHKGSAPGLPVSSSPS), 834-863 (TGDSRSLLGEHHNRSPAMIHDGTNMKSSLE), and 910-978 (ASSQ…LQRT). Residues 706–719 (SQASAVSLVSSSTS) show a composition bias toward low complexity. Over residues 910 to 923 (ASSQQFVRTGPWTQ) the composition is skewed to polar residues. Positions 924 to 936 (SASHEASSPSTSA) are enriched in low complexity. The span at 964 to 978 (SFSNQQPNDGRLQRT) shows a compositional bias: polar residues. In terms of domain architecture, FYR N-terminal spans 1019-1077 (VVHRFKCSVEPLEIGVVLSGRLWSSSQAIFPKGFRSRVKYFSIVDPIQMAYYISEILDA). Residues 1079–1169 (MQGPLFMVKL…HICTEYWRSR (91 aa)) enclose the FYR C-terminal domain.

Fe(2+) is required as a cofactor. As to expression, expressed in roots, leaf sheaths, stems and panicles.

The protein resides in the nucleus. It carries out the reaction N(6),N(6),N(6)-trimethyl-L-lysyl(4)-[histone H3] + 3 2-oxoglutarate + 3 O2 = L-lysyl(4)-[histone H3] + 3 formaldehyde + 3 succinate + 3 CO2. In terms of biological role, histone demethylase that demethylates 'Lys-4' (H3K4me) of histone H3 with a specific activity for H3K4me3, H3K4me2 and H3K4me1. No activity on H3K9me3/2/1, H3K27me3/2/1 and H3K36me3/2/1. Involved in the control of stem elongation by regulating methylation states of H3K4me3 on cytokinin oxidase (CKX) gene family, which may cause increased expression of CKX genes and reduced cytokinin levels. Prevents ectopic retrotransposition by regulating the levels of H3K4me3 in two non-LTR retrotransposons KARMA and LINE-1 (L1) and reinforcing their repressed states. The protein is Lysine-specific demethylase JMJ703 (JMJ703) of Oryza sativa subsp. japonica (Rice).